The following is an 88-amino-acid chain: Prolevitide (88 aa).

The first 20 residues, M1–A20, serve as a signal peptide directing secretion. At Q74 the chain carries Pyrrolidone carboxylic acid. Glutamine amide is present on Q87.

It belongs to the gastrin/cholecystokinin family. Expressed by the skin glands.

The protein localises to the secreted. The sequence is that of Prolevitide from Xenopus laevis (African clawed frog).